A 986-amino-acid chain; its full sequence is Ephrin type-A receptor 4 (986 aa).

A signal peptide spans 1-19; sequence MAGIFYFALFSCLFGICDA. Over 20–547 the chain is Extracellular; the sequence is VTGSRVYPAN…RIIGDGANST (528 aa). An Eph LBD domain is found at 30-209; that stretch reads EVTLLDSRSV…FYKKCPLTVR (180 aa). Asn235, Asn340, and Asn408 each carry an N-linked (GlcNAc...) asparagine glycan. Fibronectin type-III domains follow at residues 328-439 and 440-537; these read PPSA…TNQA and APSS…TVPS. Asn545 carries N-linked (GlcNAc...) asparagine glycosylation. A helical transmembrane segment spans residues 548–569; the sequence is VLLVSVSGSVVLVVILIAAFVI. The Cytoplasmic segment spans residues 570–986; the sequence is SRRRSKYSKA…QQMHGRMVPV (417 aa). 2 positions are modified to phosphotyrosine; by autocatalysis: Tyr596 and Tyr602. The Protein kinase domain maps to 621-882; the sequence is IKIEKVIGVG…QIVNMLDKLI (262 aa). ATP is bound by residues 627–635 and Lys653; that span reads IGVGEFGEV. The Proton acceptor role is filled by Asp746. A phosphotyrosine; by autocatalysis mark is found at Tyr779 and Tyr928. The SAM domain occupies 911–975; that stretch reads SAVVSVGDWL…LSSVQAMRTQ (65 aa). Residues 984–986 carry the PDZ-binding motif; it reads VPV.

The protein belongs to the protein kinase superfamily. Tyr protein kinase family. Ephrin receptor subfamily. As to quaternary structure, heterotetramer upon binding of the ligand. The heterotetramer is composed of an ephrin dimer and a receptor dimer. Oligomerization is probably required to induce biological responses. Interacts (phosphorylated at position Tyr-602) with FYN. Interacts with CDK5, CDK5R1 and NGEF; upon activation by EFNA1 induces NGEF phosphorylation by the kinase CDK5. Interacts with CHN1; effector of EPHA4 in axon guidance linking EPHA4 activation to RAC1 regulation. Interacts (via PDZ motif) with SIPA1L1 (via PDZ domain); controls neuronal morphology through regulation of the RAP1 (RAP1A or RAP1B) and RAP2 (RAP2A, RAP2B or RAP2C) GTPases. Forms a ternary complex composed of ADAM10, CADH1 and EPHA4; within the complex, CADH1 is cleaved by ADAM10 which disrupts adherens junctions. In terms of tissue distribution, ubiquitous.

The protein resides in the cell membrane. It localises to the cell projection. It is found in the axon. Its subcellular location is the dendrite. The protein localises to the postsynaptic density membrane. The protein resides in the early endosome. It localises to the cell junction. It is found in the adherens junction. It carries out the reaction L-tyrosyl-[protein] + ATP = O-phospho-L-tyrosyl-[protein] + ADP + H(+). Its function is as follows. Receptor tyrosine kinase which binds membrane-bound ephrin family ligands residing on adjacent cells, leading to contact-dependent bidirectional signaling into neighboring cells. The signaling pathway downstream of the receptor is referred to as forward signaling while the signaling pathway downstream of the ephrin ligand is referred to as reverse signaling. Highly promiscuous, it has the unique property among Eph receptors to bind and to be physiologically activated by both GPI-anchored ephrin-A and transmembrane ephrin-B ligands including EFNA1 and EFNB3. Upon activation by ephrin ligands, modulates cell morphology and integrin-dependent cell adhesion through regulation of the Rac, Rap and Rho GTPases activity. Plays an important role in the development of the nervous system controlling different steps of axonal guidance including the establishment of the corticospinal projections. May also control the segregation of motor and sensory axons during neuromuscular circuit development. In addition to its role in axonal guidance plays a role in synaptic plasticity. Activated by EFNA1 phosphorylates CDK5 at 'Tyr-15' which in turn phosphorylates NGEF regulating RHOA and dendritic spine morphogenesis. In the nervous system, also plays a role in repair after injury preventing axonal regeneration and in angiogenesis playing a role in central nervous system vascular formation. Additionally, its promiscuity makes it available to participate in a variety of cell-cell signaling regulating for instance the development of the thymic epithelium. During development of the cochlear organ of Corti, regulates pillar cell separation by forming a ternary complex with ADAM10 and CADH1 which facilitates the cleavage of CADH1 by ADAM10 and disruption of adherens junctions. Phosphorylates CAPRIN1, promoting CAPRIN1-dependent formation of a membraneless compartment. The sequence is that of Ephrin type-A receptor 4 (EPHA4) from Homo sapiens (Human).